The primary structure comprises 322 residues: uncharacterized protein (322 aa).

9 consecutive transmembrane segments (helical) span residues 5–25 (LISIIGIPALAFAISTYIPGI), 37–57 (IGPSILAPGFWAFFKFLFKET), 71–91 (LPLLSIVVLWALLSITSLTSF), 109–129 (MMYVILGSLAFSIMGWKMPFI), 153–173 (SFKMITIGSFPFYLATFLPFV), 189–209 (LFSLAGIFGAACYFIGYVIMI), 245–265 (LLLIALGSLFATLYLGIAPDI), 268–288 (PITIVENFAIALIFPILATFV), and 300–320 (IYPISYVATLIGVIGFIFALL).

It localises to the cell membrane. This is an uncharacterized protein from Methanocaldococcus jannaschii (strain ATCC 43067 / DSM 2661 / JAL-1 / JCM 10045 / NBRC 100440) (Methanococcus jannaschii).